Here is a 308-residue protein sequence, read N- to C-terminus: Glutaminase (308 aa).

The substrate site is built by S66, N117, E161, N168, Y192, Y244, and V262.

The protein belongs to the glutaminase family. Homotetramer.

The catalysed reaction is L-glutamine + H2O = L-glutamate + NH4(+). This is Glutaminase from Salmonella agona (strain SL483).